The following is a 391-amino-acid chain: Ferrochelatase (391 aa).

Fe cation is bound by residues His196 and Glu281.

The protein belongs to the ferrochelatase family.

The protein resides in the cytoplasm. The catalysed reaction is heme b + 2 H(+) = protoporphyrin IX + Fe(2+). It participates in porphyrin-containing compound metabolism; protoheme biosynthesis; protoheme from protoporphyrin-IX: step 1/1. In terms of biological role, catalyzes the ferrous insertion into protoporphyrin IX. The protein is Ferrochelatase of Prochlorococcus marinus (strain MIT 9515).